The chain runs to 303 residues: MRLFNWRRQAILHAMPVVKPDQIRTPWREFWRRFRRQHVALVAGGFVLALILVAIFARWLTPYDAENYFDYDSLNNGPSLQHWFGVDSLGRDIFSRVLVGAQISLAAGVFAVFIGAIIGTVLGLLAGYYEGWWDRFIMRICDVLFAFPGILLAIAVVAVLGSGIANVIVAVAIFSIPAFARLVRGNTLVLKQQTFIESARSIGASDTTILFSHILPGTVSSIVVFFTMRIGTSIISAASLSFLGLGAQPPTPEWGAMLNEARADMVIAPHVALFPAVAIFLTVLAFNLLGDGLRDALDPKIKG.

7 helical membrane-spanning segments follow: residues 37-57 (QHVA…AIFA), 105-125 (LAAG…LGLL), 144-164 (LFAF…GSGI), 165-185 (ANVI…LVRG), 208-228 (TILF…FFTM), 230-250 (IGTS…AQPP), and 266-286 (VIAP…VLAF). In terms of domain architecture, ABC transmembrane type-1 spans 101–290 (AQISLAAGVF…LTVLAFNLLG (190 aa)).

Belongs to the binding-protein-dependent transport system permease family. The complex is composed of two ATP-binding proteins (GsiA), two transmembrane proteins (GsiC and GsiD) and a solute-binding protein (GsiB).

It is found in the cell inner membrane. Part of the ABC transporter complex GsiABCD involved in glutathione import. Probably responsible for the translocation of the substrate across the membrane. This is Glutathione transport system permease protein GsiD from Salmonella paratyphi A (strain ATCC 9150 / SARB42).